The sequence spans 1068 residues: Receptor-like protein 13 (1068 aa).

The first 23 residues, 1 to 23 (MEGKLFLGQYLICVILLLGQLHG), serve as a signal peptide directing secretion. Over 24–986 (YKSCIEKERK…EADESTVDME (963 aa)) the chain is Extracellular. Residues Asn59 and Asn97 are each glycosylated (N-linked (GlcNAc...) asparagine). LRR repeat units lie at residues 104–129 (FEDVRSLDLSSSRSCEDCGFSGLFDD), 139–162 (LRNLEILDLSSHRFNNSIFPFLNA), 164–187 (TSLTTLFLTYNNMHSPFLVKEFKD), 188–212 (LTNLEHLDLRGNRFNGSIPTQDYNS), 216–239 (FRKLEILDLSDNLFNSRIFPFLNS), 241–264 (TSLKSLSLWGNNMGGPFPAKELRD), 265–290 (LTNVELLDLSRNRFNGSIPVRALFAL), 292–315 (KLKALDLSDNEFSSSVELQGKFAK), 325–349 (WKNMEELKLSNNKLAGQFPLCLTSL), 350–373 (TGLRVLDLSSNQLTGNVPSALANL), 375–397 (SLEYLSLFGNNFEGFFSLGLLAN), 398–423 (LSKLKVLRLDSQSNSLEVEFETSWKP), 424–447 (KFQLVVIALRSCNLEKVPHFLLHQ), 448–471 (KDLHHVDLSDNQIHGNFPSWLLEN), 472–497 (NTKLEVLLLQNNSFTSFQLPKSAHNL), 499–517 (FLNVSVNKFNHLFLQNFGW), 519–543 (LPHLVCVNLAYNGFQGNLPSSLDNM), 544–567 (KSIEFLDLSHNRFHGKLPRRFLKG), and 569–594 (YNLTILKLSHNKLSGEVFPEAANFTR). A glycan (N-linked (GlcNAc...) asparagine) is linked at Asn153. The N-linked (GlcNAc...) asparagine glycan is linked to Asn202. N-linked (GlcNAc...) asparagine glycosylation is present at Asn279. Asn397 carries N-linked (GlcNAc...) asparagine glycosylation. Residues Asn471, Asn482, and Asn501 are each glycosylated (N-linked (GlcNAc...) asparagine). Asn570 and Asn591 each carry an N-linked (GlcNAc...) asparagine glycan. One copy of the LRR 20; degenerate repeat lies at 596 to 615 (WVMSMDNNLFTGNIGKGFRS). LRR repeat units lie at residues 616–639 (LPSLNVLDISNNKLTGVIPSWIGE), 641–664 (QGLFALQLSNNMLEGEIPTSLFNI), 665–688 (SYLQLLDLSSNRLSGDIPPHVSSI), 690–710 (HGAVLLLQNNNLSGVIPDTLL), and 711–734 (LNVIVLDLRNNRLSGNLPEFINTQ). N-linked (GlcNAc...) asparagine glycosylation occurs at Asn663. The N-linked (GlcNAc...) asparagine glycan is linked to Asn700. Residues Asn735, Asn745, Asn771, Asn780, and Asn822 are each glycosylated (N-linked (GlcNAc...) asparagine). LRR repeat units follow at residues 736–757 (ISILLLRGNNFTGQIPHQFCSL) and 758–781 (SNIQLLDLSNNKFNGSIPSCLSNT). 4 LRR repeats span residues 846-870 (LKLLFGMDLSENELSGEIPVELGGL), 871-893 (VELEALNLSHNNLSGVILESFSG), 895-918 (KNVESLDLSFNRLQGPIPLQLTDM), and 920-943 (SLAVFNVSYNNLSGIVPQGRQFNT). N-linked (GlcNAc...) asparagine glycans are attached at residues Asn877 and Asn882. Residues Asn925 and Asn930 are each glycosylated (N-linked (GlcNAc...) asparagine). Residues 987 to 1007 (SFYWSFVAAYVTILLGILASL) traverse the membrane as a helical segment. Residues 1008-1068 (SFDSPWSRAW…PPALFHKTRT (61 aa)) are Cytoplasmic-facing.

It belongs to the RLP family.

Its subcellular location is the cell membrane. This Arabidopsis thaliana (Mouse-ear cress) protein is Receptor-like protein 13.